Here is an 880-residue protein sequence, read N- to C-terminus: MANLTPMMQQYFDIKKQYPDSLLFFRMGDFYELFFQDAETASRELEITLTGRSCGLEERAPMCGVPHHAATGYIDRLVSNGYKVAICEQIEDVSQAKGIVKRDVVRVITPGTLIDTQLLDDKKNNYLMSVFGSRTGFGLAYVDISTGDLFATEIKENIHPQMLIDEMGRVLPQELLYFIETDKEDPTIISMIKKRFDFYTNGYEEWSYEDTFALNQIKDHFNVVSLEGLGFHPSHLGINAAGALFHYLKTTQKRALEHINHINVYSIHEKMTLDINTRKNLELTETIRSKSKKGSLLGVLDKTSTAMGGRMLRKWIEAPLIDPVIINKRLEAVQLLKEQIELRQELKESLKKIYDLERLAGKISYGSVTPRDLIALKNSLSYLPSIINGLEKIQGETFQSLVQSIDPLDEVHSLVELSILEDAPLSSKDGGIIQEGYHKEVDELKNASTEGRQWIAQLEQKERVNSGIKSLKIKYNKIFGYYIEITKSNLSMVPTEYIRKQTLANCERYVTPELKEIESKILGAEEKVILLEYHLFIEVREKIAHEITRIQQTARAIAELDVLYSFAEIAAENNFIKPHINTSNEIKIVEGRHPVVELTFNKESFVPNDTYMDNRDCSMSIITGPNMAGKSTYMRQVALIVLMAQIGSFVPASEASIGIVDRIFTRIGASDDLAQGHSTFMVEMSEMANILNNATANSLVILDEIGRGTSTFDGLSIAWAVIEYMQQYKKSKTLFSTHYHELTELEGKIQGVKNYNILVEEDGEEIVFLRKVVSGSTSKSYGIQVAKLAGLPLNTLIRAQEILSDLEKKNNEIKIPAEEEIALSRESEGNSRDTNGIQLDLTSFSYNEIIEDIRSLNLLETTPMTAMNLLYQLQKRISSL.

624-631 (GPNMAGKS) is a binding site for ATP.

The protein belongs to the DNA mismatch repair MutS family.

This protein is involved in the repair of mismatches in DNA. It is possible that it carries out the mismatch recognition step. This protein has a weak ATPase activity. In Alkaliphilus metalliredigens (strain QYMF), this protein is DNA mismatch repair protein MutS.